Here is a 285-residue protein sequence, read N- to C-terminus: Bifunctional protein FolD (285 aa).

NADP(+) is bound by residues Gly-169–Ser-171, Ser-194, and Ile-235.

This sequence belongs to the tetrahydrofolate dehydrogenase/cyclohydrolase family. As to quaternary structure, homodimer.

It catalyses the reaction (6R)-5,10-methylene-5,6,7,8-tetrahydrofolate + NADP(+) = (6R)-5,10-methenyltetrahydrofolate + NADPH. The enzyme catalyses (6R)-5,10-methenyltetrahydrofolate + H2O = (6R)-10-formyltetrahydrofolate + H(+). It participates in one-carbon metabolism; tetrahydrofolate interconversion. Its function is as follows. Catalyzes the oxidation of 5,10-methylenetetrahydrofolate to 5,10-methenyltetrahydrofolate and then the hydrolysis of 5,10-methenyltetrahydrofolate to 10-formyltetrahydrofolate. In Microcystis aeruginosa (strain NIES-843 / IAM M-2473), this protein is Bifunctional protein FolD.